The primary structure comprises 346 residues: Cyclin-dependent kinase 7 (346 aa).

Position 2 is an N-acetylalanine (Ala-2). Ser-7 carries the phosphoserine modification. A Protein kinase domain is found at Tyr-12–Phe-295. Residues Leu-18–Val-26 and Lys-41 each bind ATP. Asp-137 functions as the Proton acceptor in the catalytic mechanism. A Phosphoserine; by CDK1 and CDK2 modification is found at Ser-164. Phosphothreonine; by CDK2 is present on Thr-170.

This sequence belongs to the protein kinase superfamily. CMGC Ser/Thr protein kinase family. CDC2/CDKX subfamily. As to quaternary structure, associates primarily with cyclin-H (CCNH) and MAT1 to form the CAK complex. CAK can further associate with the core-TFIIH to form the TFIIH basal transcription factor; this complex is sensitive to UV light. The CAK complex binds to p53/TP53 in response to DNA damage. Interacts with CDK2, SF1/NR5A1, PUF60 and PRKCI. Interacts with HINT1. Phosphorylation of Ser-164 during mitosis inactivates the enzyme. Phosphorylation of Thr-170 is required for activity. Phosphorylated at Ser-164 and Thr-170 by CDK2.

It is found in the nucleus. The protein localises to the cytoplasm. Its subcellular location is the perinuclear region. It carries out the reaction L-seryl-[protein] + ATP = O-phospho-L-seryl-[protein] + ADP + H(+). The catalysed reaction is L-threonyl-[protein] + ATP = O-phospho-L-threonyl-[protein] + ADP + H(+). It catalyses the reaction [DNA-directed RNA polymerase] + ATP = phospho-[DNA-directed RNA polymerase] + ADP + H(+). Phosphorylation at Thr-170 is required for enzymatic activity. The association of p53/TP53 to the CAK complex in response to DNA damage reduces kinase activity toward CDK2 and RNA polymerase II repetitive C-terminal domain (CTD), thus stopping cell cycle progression. In terms of biological role, serine/threonine kinase involved in cell cycle control and in RNA polymerase II-mediated RNA transcription. Cyclin-dependent kinases (CDKs) are activated by the binding to a cyclin and mediate the progression through the cell cycle. Each different complex controls a specific transition between 2 subsequent phases in the cell cycle. Required for both activation and complex formation of CDK1/cyclin-B during G2-M transition, and for activation of CDK2/cyclins during G1-S transition (but not complex formation). CDK7 is the catalytic subunit of the CDK-activating kinase (CAK) complex. Phosphorylates SPT5/SUPT5H, SF1/NR5A1, POLR2A, p53/TP53, CDK1, CDK2, CDK4, CDK6 and CDK11B/CDK11. Initiates transcription by RNA polymerase II by mediating phosphorylation of POLR2A at 'Ser-5' of the repetitive C-terminal domain (CTD) when POLR2A is in complex with DNA, promoting dissociation from DNA and initiation. CAK activates the cyclin-associated kinases CDK1, CDK2, CDK4 and CDK6 by threonine phosphorylation, thus regulating cell cycle progression. CAK complexed to the core-TFIIH basal transcription factor activates RNA polymerase II by serine phosphorylation of the CTD of POLR2A, allowing its escape from the promoter and elongation of the transcripts. Its expression and activity are constant throughout the cell cycle. Upon DNA damage, triggers p53/TP53 activation by phosphorylation, but is inactivated in turn by p53/TP53; this feedback loop may lead to an arrest of the cell cycle and of the transcription, helping in cell recovery, or to apoptosis. Required for DNA-bound peptides-mediated transcription and cellular growth inhibition. In Mus musculus (Mouse), this protein is Cyclin-dependent kinase 7 (Cdk7).